Here is a 193-residue protein sequence, read N- to C-terminus: Holliday junction branch migration complex subunit RuvA (193 aa).

The domain I stretch occupies residues 1 to 64 (MIGRIAGTLI…EDAHLLYGFG (64 aa)). The tract at residues 65–143 (TAAERETFRQ…ADLGTVPGGP (79 aa)) is domain II. The tract at residues 144–151 (AVSDDAVD) is flexible linker. Residues 151-193 (DVLNALLALGYSDKEAAQAIKQVPAGTGVSEGIKLALKALSKG) are domain III.

Belongs to the RuvA family. Homotetramer. Forms an RuvA(8)-RuvB(12)-Holliday junction (HJ) complex. HJ DNA is sandwiched between 2 RuvA tetramers; dsDNA enters through RuvA and exits via RuvB. An RuvB hexamer assembles on each DNA strand where it exits the tetramer. Each RuvB hexamer is contacted by two RuvA subunits (via domain III) on 2 adjacent RuvB subunits; this complex drives branch migration. In the full resolvosome a probable DNA-RuvA(4)-RuvB(12)-RuvC(2) complex forms which resolves the HJ.

Its subcellular location is the cytoplasm. In terms of biological role, the RuvA-RuvB-RuvC complex processes Holliday junction (HJ) DNA during genetic recombination and DNA repair, while the RuvA-RuvB complex plays an important role in the rescue of blocked DNA replication forks via replication fork reversal (RFR). RuvA specifically binds to HJ cruciform DNA, conferring on it an open structure. The RuvB hexamer acts as an ATP-dependent pump, pulling dsDNA into and through the RuvAB complex. HJ branch migration allows RuvC to scan DNA until it finds its consensus sequence, where it cleaves and resolves the cruciform DNA. The polypeptide is Holliday junction branch migration complex subunit RuvA (Ralstonia nicotianae (strain ATCC BAA-1114 / GMI1000) (Ralstonia solanacearum)).